Here is a 614-residue protein sequence, read N- to C-terminus: DNA repair protein rad26 (614 aa).

A compositionally biased stretch (low complexity) spans 29–43; sequence QAQTQVQAQSSQVVV. Disordered regions lie at residues 29–76 and 157–214; these read QAQT…QASL and KKMK…TAED. Composition is skewed to polar residues over residues 50–76 and 181–190; these read QNLNLPNSYTNSSQKVRESTVNSQASL and LLSSSDQLAK. A compositionally biased stretch (basic residues) spans 191–207; sequence STKHAAKNSPSKKKRKT.

In terms of assembly, interacts with cds1.

It localises to the nucleus. Functionally, involved in cell cycle arrest when DNA synthesis is inhibited by hydroxyurea, and in mitosis arrest after treatment with DNA-damaging agents. This protein is S phase-specific. This Schizosaccharomyces pombe (strain 972 / ATCC 24843) (Fission yeast) protein is DNA repair protein rad26 (rad26).